Here is a 632-residue protein sequence, read N- to C-terminus: MEEGERWREGHVYQRSSETRKPTNYDRPDSPVTHYVSDTHIVGTLMDELEVETGLITTILIATFNEMRRSHKPNELDDNINWWRHEVFYQIYPRSFKDSDGDGIGDLKGITSKLQYFVDTGITAIWLSPIYKSPMVDFGYDISDYRDIQPEYGTLEDFDALIAKANQLGIKVILDFVPNHSSDEHEWFKKSAAREPGYEDFYVWEDGIPGDNETRLPPNNWVSVFSGSAWQWHEERQQFYLRQFTKGQPDLNYRNPAVVQAMDEVLLYWLQKGVAGFRIDAVIYIYEDEQLRDEPLSGSTSDPNSVDYLEHIYTRNLPECYGLIQHWRQLLDNYTADNPGPVRIMMTEGYADLSLLMNYYEDEDGVQGAHFPFNFDFITELNANSAAPDFVYFIQRWLTYMPPGHSANWVMGNHDNPRVASRYGVGTVDAMNMLMMTLPGIGITYYGEELGMVDYRDISWNDTVDQPACDAGLDNYKWVSRDPERTPMQWSDEKNAGFSTGDSTWLPVHPNYQELNLLTQQEATYSHYKVYQSLIKLRQSRVLRDGSFTAQALNRNVFAIKRELRGQPTLLTVINVSNRTQQVDVSNFIDLPNRLTLLVVGVCSQHRVSERLKPAEVKLSPHEGLVIQLKAR.

Basic and acidic residues predominate over residues 1 to 29; the sequence is MEEGERWREGHVYQRSSETRKPTNYDRPD. The disordered stretch occupies residues 1-30; the sequence is MEEGERWREGHVYQRSSETRKPTNYDRPDS. Residues Asn179 and Asn212 are each glycosylated (N-linked (GlcNAc...) asparagine). Asp280 functions as the Nucleophile in the catalytic mechanism. Asn333 carries N-linked (GlcNAc...) asparagine glycosylation. The active-site Proton donor is the Glu348. Residues Asn461, Asn575, and Asn578 are each glycosylated (N-linked (GlcNAc...) asparagine).

The protein belongs to the glycosyl hydrolase 13 family.

The enzyme catalyses Hydrolysis of terminal, non-reducing (1-&gt;4)-linked alpha-D-glucose residues with release of alpha-D-glucose.. This is Maltase 1 (Mal-B1) from Drosophila virilis (Fruit fly).